The chain runs to 346 residues: Cell division protein ZipA (346 aa).

At 1–6 (MEDLQL) the chain is on the periplasmic side. Residues 7 to 27 (VLFVLGAIAIVAVLVHGFWSI) traverse the membrane as a helical segment. At 28–346 (RRQQPKSLKD…DYLHRIRANA (319 aa)) the chain is on the cytoplasmic side. 2 disordered regions span residues 76–103 (ANEA…QPVE) and 121–145 (QPDF…RQEP).

It belongs to the ZipA family. As to quaternary structure, interacts with FtsZ via their C-terminal domains.

The protein localises to the cell inner membrane. Essential cell division protein that stabilizes the FtsZ protofilaments by cross-linking them and that serves as a cytoplasmic membrane anchor for the Z ring. Also required for the recruitment to the septal ring of downstream cell division proteins. This chain is Cell division protein ZipA, found in Shewanella sp. (strain MR-4).